A 241-amino-acid polypeptide reads, in one-letter code: DNA repair protein RecO (241 aa).

The protein belongs to the RecO family.

Involved in DNA repair and RecF pathway recombination. This is DNA repair protein RecO from Roseobacter denitrificans (strain ATCC 33942 / OCh 114) (Erythrobacter sp. (strain OCh 114)).